The sequence spans 156 residues: Small ribosomal subunit protein uS7 (156 aa).

It belongs to the universal ribosomal protein uS7 family. As to quaternary structure, part of the 30S ribosomal subunit. Contacts proteins S9 and S11.

In terms of biological role, one of the primary rRNA binding proteins, it binds directly to 16S rRNA where it nucleates assembly of the head domain of the 30S subunit. Is located at the subunit interface close to the decoding center, probably blocks exit of the E-site tRNA. In Phytoplasma australiense, this protein is Small ribosomal subunit protein uS7.